The primary structure comprises 86 residues: Small ribosomal subunit protein bS20 (86 aa).

Belongs to the bacterial ribosomal protein bS20 family.

Functionally, binds directly to 16S ribosomal RNA. The chain is Small ribosomal subunit protein bS20 from Kocuria rhizophila (strain ATCC 9341 / DSM 348 / NBRC 103217 / DC2201).